A 199-amino-acid chain; its full sequence is Recombination protein RecR (199 aa).

Residues 57 to 72 (CPICGNITEKEVCDIC) form a C4-type zinc finger. The 97-residue stretch at 80 to 176 (TTIMVVEQPK…KVTRLAAGLS (97 aa)) folds into the Toprim domain.

This sequence belongs to the RecR family.

Functionally, may play a role in DNA repair. It seems to be involved in an RecBC-independent recombinational process of DNA repair. It may act with RecF and RecO. This Lactobacillus helveticus (strain DPC 4571) protein is Recombination protein RecR.